A 534-amino-acid polypeptide reads, in one-letter code: Phosphoenolpyruvate carboxykinase (ATP) (534 aa).

The substrate site is built by arginine 60, tyrosine 195, and lysine 201. Residues lysine 201, histidine 221, and 237-245 each bind ATP; that span reads GLSGTGKTT. The Mn(2+) site is built by lysine 201 and histidine 221. Residue aspartate 258 coordinates Mn(2+). Positions 287, 324, and 449 each coordinate ATP. Arginine 324 contacts substrate.

It belongs to the phosphoenolpyruvate carboxykinase (ATP) family. It depends on Mn(2+) as a cofactor.

Its subcellular location is the cytoplasm. The catalysed reaction is oxaloacetate + ATP = phosphoenolpyruvate + ADP + CO2. It functions in the pathway carbohydrate biosynthesis; gluconeogenesis. Its function is as follows. Involved in the gluconeogenesis. Catalyzes the conversion of oxaloacetate (OAA) to phosphoenolpyruvate (PEP) through direct phosphoryl transfer between the nucleoside triphosphate and OAA. The polypeptide is Phosphoenolpyruvate carboxykinase (ATP) (Flavobacterium johnsoniae (strain ATCC 17061 / DSM 2064 / JCM 8514 / BCRC 14874 / CCUG 350202 / NBRC 14942 / NCIMB 11054 / UW101) (Cytophaga johnsonae)).